A 418-amino-acid chain; its full sequence is Serine hydroxymethyltransferase (418 aa).

Residues L120 and 124-126 contribute to the (6S)-5,6,7,8-tetrahydrofolate site; that span reads GHL. An N6-(pyridoxal phosphate)lysine modification is found at K229. 353–355 contacts (6S)-5,6,7,8-tetrahydrofolate; sequence SPF.

Belongs to the SHMT family. In terms of assembly, homodimer. Pyridoxal 5'-phosphate is required as a cofactor.

The protein localises to the cytoplasm. It catalyses the reaction (6R)-5,10-methylene-5,6,7,8-tetrahydrofolate + glycine + H2O = (6S)-5,6,7,8-tetrahydrofolate + L-serine. It functions in the pathway one-carbon metabolism; tetrahydrofolate interconversion. It participates in amino-acid biosynthesis; glycine biosynthesis; glycine from L-serine: step 1/1. Functionally, catalyzes the reversible interconversion of serine and glycine with tetrahydrofolate (THF) serving as the one-carbon carrier. This reaction serves as the major source of one-carbon groups required for the biosynthesis of purines, thymidylate, methionine, and other important biomolecules. Also exhibits THF-independent aldolase activity toward beta-hydroxyamino acids, producing glycine and aldehydes, via a retro-aldol mechanism. The polypeptide is Serine hydroxymethyltransferase (Psychrobacter sp. (strain PRwf-1)).